A 98-amino-acid chain; its full sequence is Large ribosomal subunit protein bL25 (98 aa).

The protein belongs to the bacterial ribosomal protein bL25 family. Part of the 50S ribosomal subunit; part of the 5S rRNA/L5/L18/L25 subcomplex. Contacts the 5S rRNA. Binds to the 5S rRNA independently of L5 and L18.

In terms of biological role, this is one of the proteins that binds to the 5S RNA in the ribosome where it forms part of the central protuberance. The chain is Large ribosomal subunit protein bL25 from Synechocystis sp. (strain ATCC 27184 / PCC 6803 / Kazusa).